A 292-amino-acid chain; its full sequence is 5,10-methylenetetrahydrofolate reductase (292 aa).

Glu-28 acts as the Proton donor/acceptor in catalysis. Residue Thr-59 coordinates NADH. Tyr-60, Ala-62, His-88, Arg-118, Gly-119, Asp-120, Ala-132, Tyr-152, His-156, Asp-165, Asn-168, Lys-171, and Lys-172 together coordinate FAD. Asp-120 contacts (6S)-5-methyl-5,6,7,8-tetrahydrofolate. Gln-183 provides a ligand contact to NADH. The (6S)-5-methyl-5,6,7,8-tetrahydrofolate site is built by Gln-183, Gln-219, and Lys-279.

The protein belongs to the methylenetetrahydrofolate reductase family. Requires FAD as cofactor.

It carries out the reaction (6S)-5-methyl-5,6,7,8-tetrahydrofolate + NAD(+) = (6R)-5,10-methylene-5,6,7,8-tetrahydrofolate + NADH + H(+). It participates in one-carbon metabolism; tetrahydrofolate interconversion. Its pathway is amino-acid biosynthesis; L-methionine biosynthesis via de novo pathway. Catalyzes the NADH-dependent reduction of 5,10-methylenetetrahydrofolate to 5-methyltetrahydrofolate. Is required to provide the methyl group necessary for methionine synthetase to convert homocysteine to methionine; the methyl group is given by 5-methyltetrahydrofolate. In Buchnera aphidicola subsp. Schizaphis graminum (strain Sg), this protein is 5,10-methylenetetrahydrofolate reductase (metF).